Here is a 183-residue protein sequence, read N- to C-terminus: Large ribosomal subunit protein eL18 (183 aa).

The tract at residues arginine 150–valine 183 is disordered. Residues serine 161–valine 183 show a composition bias toward basic residues.

Belongs to the eukaryotic ribosomal protein eL18 family.

Its subcellular location is the cytoplasm. This chain is Large ribosomal subunit protein eL18 (RpL18), found in Spodoptera frugiperda (Fall armyworm).